The chain runs to 95 residues: MDSGFGSDFGGTGGGKLDPGAIMEQVKVQIAVANAQELLQRMTDKCFRKCIGKPGGSLDNSEQKCIAMCMDRYMDAWNTVSRAYNSRLQRERANM.

At Met-1 the chain carries N-acetylmethionine. At Ser-7 the chain carries Phosphoserine. Residues 46 to 69 (CFRKCIGKPGGSLDNSEQKCIAMC) carry the Twin CX3C motif motif. 2 disulfides stabilise this stretch: Cys-46–Cys-69 and Cys-50–Cys-65. Lys-53 is subject to N6-succinyllysine.

This sequence belongs to the small Tim family. As to quaternary structure, heterohexamer; composed of 3 copies of TIMM8 (TIMM8A or TIMM8B) and 3 copies of TIMM13, named soluble 70 kDa complex. Associates with the TIM22 complex, whose core is composed of TIMM22. As to expression, present at high level in liver and brain, and at lower level in muscle and heart. In CNS sections, it is predominantly present in the soma and the dendritic portion of the Purkinje cells of the cerebellum, but not in the glial cells. Scattered expression also is also detected in the brain stem, olfactory bulb, substantia nigra, hippocampus and striatum (at protein level).

It localises to the mitochondrion inner membrane. In terms of biological role, mitochondrial intermembrane chaperone that participates in the import and insertion of some multi-pass transmembrane proteins into the mitochondrial inner membrane. Also required for the transfer of beta-barrel precursors from the TOM complex to the sorting and assembly machinery (SAM complex) of the outer membrane. Acts as a chaperone-like protein that protects the hydrophobic precursors from aggregation and guide them through the mitochondrial intermembrane space. The TIMM8-TIMM13 complex mediates the import of proteins such as TIMM23, SLC25A12/ARALAR1 and SLC25A13/ARALAR2, while the predominant TIMM9-TIMM10 70 kDa complex mediates the import of much more proteins. The protein is Mitochondrial import inner membrane translocase subunit Tim13 (Timm13) of Mus musculus (Mouse).